Reading from the N-terminus, the 96-residue chain is Small ribosomal subunit protein bS20 (96 aa).

This sequence belongs to the bacterial ribosomal protein bS20 family.

Its function is as follows. Binds directly to 16S ribosomal RNA. The polypeptide is Small ribosomal subunit protein bS20 (Anaplasma phagocytophilum (strain HZ)).